A 337-amino-acid polypeptide reads, in one-letter code: Holliday junction branch migration complex subunit RuvB (337 aa).

The interval 4–184 (ADRLIQPQVL…FGIPLRLEFY (181 aa)) is large ATPase domain (RuvB-L). ATP-binding positions include Arg-24, Gly-65, Lys-68, Thr-69, Thr-70, 131–133 (EDY), Arg-174, Tyr-184, and Arg-221. Position 69 (Thr-69) interacts with Mg(2+). The segment at 185–255 (NVKDLCTIVT…VAQQALDMLD (71 aa)) is small ATPAse domain (RuvB-S). Positions 258-337 (QEGFDYLDRK…FNIITPDVPK (80 aa)) are head domain (RuvB-H). Residues Arg-294, Arg-313, and Arg-318 each coordinate DNA.

The protein belongs to the RuvB family. In terms of assembly, homohexamer. Forms an RuvA(8)-RuvB(12)-Holliday junction (HJ) complex. HJ DNA is sandwiched between 2 RuvA tetramers; dsDNA enters through RuvA and exits via RuvB. An RuvB hexamer assembles on each DNA strand where it exits the tetramer. Each RuvB hexamer is contacted by two RuvA subunits (via domain III) on 2 adjacent RuvB subunits; this complex drives branch migration. In the full resolvosome a probable DNA-RuvA(4)-RuvB(12)-RuvC(2) complex forms which resolves the HJ.

The protein resides in the cytoplasm. It carries out the reaction ATP + H2O = ADP + phosphate + H(+). Its function is as follows. The RuvA-RuvB-RuvC complex processes Holliday junction (HJ) DNA during genetic recombination and DNA repair, while the RuvA-RuvB complex plays an important role in the rescue of blocked DNA replication forks via replication fork reversal (RFR). RuvA specifically binds to HJ cruciform DNA, conferring on it an open structure. The RuvB hexamer acts as an ATP-dependent pump, pulling dsDNA into and through the RuvAB complex. RuvB forms 2 homohexamers on either side of HJ DNA bound by 1 or 2 RuvA tetramers; 4 subunits per hexamer contact DNA at a time. Coordinated motions by a converter formed by DNA-disengaged RuvB subunits stimulates ATP hydrolysis and nucleotide exchange. Immobilization of the converter enables RuvB to convert the ATP-contained energy into a lever motion, pulling 2 nucleotides of DNA out of the RuvA tetramer per ATP hydrolyzed, thus driving DNA branch migration. The RuvB motors rotate together with the DNA substrate, which together with the progressing nucleotide cycle form the mechanistic basis for DNA recombination by continuous HJ branch migration. Branch migration allows RuvC to scan DNA until it finds its consensus sequence, where it cleaves and resolves cruciform DNA. In Shewanella denitrificans (strain OS217 / ATCC BAA-1090 / DSM 15013), this protein is Holliday junction branch migration complex subunit RuvB.